The primary structure comprises 643 residues: DNA-directed RNA polymerase subunit beta' (643 aa).

4 residues coordinate Zn(2+): Cys-83, Cys-85, Cys-98, and Cys-101. Mg(2+) contacts are provided by Asp-480, Asp-482, and Asp-484.

The protein belongs to the RNA polymerase beta' chain family. RpoC1 subfamily. As to quaternary structure, in plastids the minimal PEP RNA polymerase catalytic core is composed of four subunits: alpha, beta, beta', and beta''. When a (nuclear-encoded) sigma factor is associated with the core the holoenzyme is formed, which can initiate transcription. Requires Mg(2+) as cofactor. Zn(2+) is required as a cofactor.

It localises to the plastid. It is found in the organellar chromatophore. The catalysed reaction is RNA(n) + a ribonucleoside 5'-triphosphate = RNA(n+1) + diphosphate. Functionally, DNA-dependent RNA polymerase catalyzes the transcription of DNA into RNA using the four ribonucleoside triphosphates as substrates. This chain is DNA-directed RNA polymerase subunit beta', found in Paulinella chromatophora.